Reading from the N-terminus, the 130-residue chain is Small ribosomal subunit protein uS9 (130 aa).

It belongs to the universal ribosomal protein uS9 family.

This chain is Small ribosomal subunit protein uS9, found in Xanthomonas oryzae pv. oryzae (strain MAFF 311018).